The sequence spans 507 residues: MTQMLHSLLRAVGLPVPEGLANPSLAMVSCDSRSVAQGCLFLGLPGEQVDGGSFWRQALAAGAEAAVIGPAAAALQPPGPTDAVVVVPEPVAAWVGQLAAAFWQQPSSRFALIGVTGTNGKTTTTHLIEHLSVAVGRSTALFGTLVNRWPNYSVPATHTTAFADRLQAQLAQAVEAGAELGVMEVSSHALEQQRVAGCRFAGAVFTNLTQDHLDYHCSMEAYFEAKAQLFAPPLLESGSAKAVVNIDSPWGARLAQRLGDTCWRSSLAEGVLQQADAELKMTELTMSSDGVQGRLISPCGEGWFDSPLMGRFNLMNLLQAVGVLLQQGLPLPLLLKAIADFRGVPGRMERVLIPAADATQVPTVLVDYAHTPDGLENALKASRPFTSKNLCCVFGCGGDRDRGKRSQMAAIAARLADRVVVTSDNPRTEDPQQILADVVAGIPEGTTCTVEVDRAVAIALAIAEAAPGDVVLVAGKGHEDYQILGTSKVHFDDREEAERALKQRLDG.

S32 contributes to the UDP-N-acetyl-alpha-D-muramoyl-L-alanyl-D-glutamate binding site. 117–123 lines the ATP pocket; that stretch reads GTNGKTT. Residues 159–160, S186, Q192, and R194 contribute to the UDP-N-acetyl-alpha-D-muramoyl-L-alanyl-D-glutamate site; that span reads TT. At K226 the chain carries N6-carboxylysine. Meso-2,6-diaminopimelate is bound by residues R400, 424–427, G475, and E479; that span reads DNPR. The Meso-diaminopimelate recognition motif signature appears at 424–427; it reads DNPR.

The protein belongs to the MurCDEF family. MurE subfamily. Requires Mg(2+) as cofactor. Post-translationally, carboxylation is probably crucial for Mg(2+) binding and, consequently, for the gamma-phosphate positioning of ATP.

It is found in the cytoplasm. The catalysed reaction is UDP-N-acetyl-alpha-D-muramoyl-L-alanyl-D-glutamate + meso-2,6-diaminopimelate + ATP = UDP-N-acetyl-alpha-D-muramoyl-L-alanyl-gamma-D-glutamyl-meso-2,6-diaminopimelate + ADP + phosphate + H(+). Its pathway is cell wall biogenesis; peptidoglycan biosynthesis. Catalyzes the addition of meso-diaminopimelic acid to the nucleotide precursor UDP-N-acetylmuramoyl-L-alanyl-D-glutamate (UMAG) in the biosynthesis of bacterial cell-wall peptidoglycan. The chain is UDP-N-acetylmuramoyl-L-alanyl-D-glutamate--2,6-diaminopimelate ligase from Prochlorococcus marinus (strain MIT 9313).